A 73-amino-acid polypeptide reads, in one-letter code: DNA-directed RNA polymerase subunit omega (73 aa).

The protein belongs to the RNA polymerase subunit omega family. As to quaternary structure, the RNAP catalytic core consists of 2 alpha, 1 beta, 1 beta' and 1 omega subunit. When a sigma factor is associated with the core the holoenzyme is formed, which can initiate transcription.

It catalyses the reaction RNA(n) + a ribonucleoside 5'-triphosphate = RNA(n+1) + diphosphate. Promotes RNA polymerase assembly. Latches the N- and C-terminal regions of the beta' subunit thereby facilitating its interaction with the beta and alpha subunits. The sequence is that of DNA-directed RNA polymerase subunit omega from Maridesulfovibrio salexigens (strain ATCC 14822 / DSM 2638 / NCIMB 8403 / VKM B-1763) (Desulfovibrio salexigens).